The following is a 612-amino-acid chain: Zinc metalloproteinase-disintegrin-like HV1 (612 aa).

The first 20 residues, 1 to 20, serve as a signal peptide directing secretion; that stretch reads MIQVLLVTICLAVFPYQGSS. Residues 21–188 constitute a propeptide that is removed on maturation; that stretch reads IILESGNVND…SIKEDSQSNL (168 aa). The region spanning 200–396 is the Peptidase M12B domain; the sequence is KYVKFFLVAD…NMPQCILKKP (197 aa). N219 is a glycosylation site (N-linked (GlcNAc...) asparagine). 3 disulfide bridges follow: C311–C391, C351–C375, and C353–C358. Position 336 (H336) interacts with Zn(2+). Residue E337 is part of the active site. H340 and H346 together coordinate Zn(2+). Positions 404–489 constitute a Disintegrin domain; it reads PPVCGNYFVE…AECTDRFQRN (86 aa). Ca(2+) is bound by residues V406, N409, F411, E413, E416, and D419. 14 cysteine pairs are disulfide-bonded: C407–C436, C418–C431, C420–C426, C430–C453, C444–C450, C449–C475, C462–C482, C469–C500, C493–C505, C512–C562, C527–C573, C540–C550, C557–C599, and C593–C605. The D/ECD-tripeptide signature appears at 468–470; that stretch reads ECD. Residues D470, M471, D473, D484, and R485 each coordinate Ca(2+). An N-linked (GlcNAc...) asparagine glycan is attached at N502. A glycan (N-linked (GlcNAc...) asparagine) is linked at N609.

It belongs to the venom metalloproteinase (M12B) family. P-III subfamily. P-IIIc sub-subfamily. In terms of assembly, homodimer; disulfide-linked. Requires Zn(2+) as cofactor. In terms of tissue distribution, expressed by the venom gland.

It is found in the secreted. With respect to regulation, inhibited by EDTA and EGTA. Its function is as follows. Snake venom zinc metalloproteinase-disintegrin-like that potently activates prothrombin (F2). Does not elicit any hemorrhagic response. Barely inhibits collagen-induced platelet aggregation. Hydrolyzes the alpha-chain of fibrin and fibrinogen (FGA), without affecting the Bbeta- and gamma-chains. Induces apoptosis in cultured vascular endothelial cells. This Protobothrops flavoviridis (Habu) protein is Zinc metalloproteinase-disintegrin-like HV1.